A 206-amino-acid chain; its full sequence is Cytidylate kinase (206 aa).

An ATP-binding site is contributed by 9-17 (GPAAAGKGT).

This sequence belongs to the cytidylate kinase family. Type 1 subfamily.

Its subcellular location is the cytoplasm. The enzyme catalyses CMP + ATP = CDP + ADP. It carries out the reaction dCMP + ATP = dCDP + ADP. The protein is Cytidylate kinase of Cereibacter sphaeroides (strain ATCC 17023 / DSM 158 / JCM 6121 / CCUG 31486 / LMG 2827 / NBRC 12203 / NCIMB 8253 / ATH 2.4.1.) (Rhodobacter sphaeroides).